The sequence spans 245 residues: 8-amino-3,8-dideoxy-manno-octulosonate cytidylyltransferase (245 aa).

It belongs to the KdsB family.

It is found in the cytoplasm. It carries out the reaction 8-amino-3,8-dideoxy-alpha-D-manno-octulosonate + CTP = CMP-8-amino-3,8-dideoxy-alpha-D-manno-oct-2-ulosonate + diphosphate. The protein operates within bacterial outer membrane biogenesis; lipopolysaccharide biosynthesis. Activates KDO8N (a required 8-carbon sugar) for incorporation into bacterial lipopolysaccharide in the Shewanella genus. In Shewanella putrefaciens (strain CN-32 / ATCC BAA-453), this protein is 8-amino-3,8-dideoxy-manno-octulosonate cytidylyltransferase.